The chain runs to 930 residues: Endoplasmic reticulum aminopeptidase 1 (930 aa).

Residues 1 to 2 lie on the Cytoplasmic side of the membrane; the sequence is MP. A helical; Signal-anchor for type II membrane protein membrane pass occupies residues 3 to 23; the sequence is SLLPLVLTFLSVSSPSWCQNS. Residues 24 to 930 lie on the Lumenal side of the membrane; it reads DIESLKASNG…WLQKEKPELL (907 aa). N-linked (GlcNAc...) asparagine glycans are attached at residues Asn59 and Asn143. Substrate contacts are provided by residues Glu172 and 306-310; that span reads GAMEN. Residue His342 coordinates Zn(2+). Residue Glu343 is part of the active site. Zn(2+) is bound by residues His346 and Glu365. Cys393 and Cys432 form a disulfide bridge. Asn403 and Asn655 each carry an N-linked (GlcNAc...) asparagine glycan. An intrachain disulfide couples Cys725 to Cys732. Asn749 and Asn890 each carry an N-linked (GlcNAc...) asparagine glycan.

Belongs to the peptidase M1 family. As to quaternary structure, monomer. May also exist as a heterodimer; with ERAP2. Interacts with RBMX. It depends on Zn(2+) as a cofactor. Post-translationally, N-glycosylated.

It is found in the endoplasmic reticulum membrane. In terms of biological role, aminopeptidase that plays a central role in peptide trimming, a step required for the generation of most HLA class I-binding peptides. Peptide trimming is essential to customize longer precursor peptides to fit them to the correct length required for presentation on MHC class I molecules. Strongly prefers substrates 9-16 residues long. Rapidly degrades 13-mer to a 9-mer and then stops. Preferentially hydrolyzes the residue Leu and peptides with a hydrophobic C-terminus, while it has weak activity toward peptides with charged C-terminus. May play a role in the inactivation of peptide hormones. May be involved in the regulation of blood pressure through the inactivation of angiotensin II and/or the generation of bradykinin in the kidney. In Mus musculus (Mouse), this protein is Endoplasmic reticulum aminopeptidase 1 (Erap1).